The following is a 999-amino-acid chain: MKGLSGSRSHHHVVTCDPSFESMGHHLDHKPYLISQIDNPHPVDHSYYSQRSPYQPDCVVPYGTFPRRHYSSQHELKDEMAVVPYSGGGVPASKGQQRLPVALLDQFDRQLPVPRDGYHTLQYKRAAAALEQRSDSPGRIRHLVHSVQKLFTKSHSLEGPHHGHGHGKGSINGGKASPDGEPPAIRHRKRSKSRERCKSAEPKNRTPPSGYWSSDELEREACLFHHGPPGVMTMGRHPDKSQSQYFLEAYNTINDQALKNSRSNNDLGKCSTCTSIPLSVDASQLVKKSSWSSSLTVSRARQVYQKASVNVDKALVKAEACQQERSCQFLQLWKCVFVELSVCLDADMHVWAKVCDVASLLNRQVPQDEWGGFPLGKDEDIPCRRMRSGSYVKAMAEDDSGDSDGSPKPSPKMQARRASYLKATQPSLTEMTTLKISQEHSPKLQIRSHSYLRAVSEVSINRSLDTLDPKALLASPQYRSRNESYMRAMSTISQIEAMCESVFNEMESHAVDALDLPMPGCFRMRSHSYVRAIDQGCSQDDDSPLLPASPPRTTTTVRTIQSSTVSSCITTYKKTPPPVPPRTSTKPFISITAQSSTESAQDAYMDGPGTRGEPVLHSGLSNSTESIDSMKALTAAIEAANAQIHGPASQHVSNSTMTISTAPPSPLPLPVPVPVPIPIPALEDVRRDVLRKSRCLSIGIQSKFQSVGVQVEEEHGVTTAVQADLDTPDYTPADSPVTDFPAAGCLSRQYSRDAATSTVSIQGSGNHYHACTSDDYEDVGFDPSILPPPDPWIDSVIEDSLEVVGRSVCQRDGRWFLKLLQAETERMEGWCRQMEHDEKENKMPDEVLGKIRGAVGSAQLLMSQKFQQFRELCEENLNPNAHPRPVAQDLAGFWDMLQLSIENISLKFDELHQLKANNWRPLDPPERKERRLPPPVPKKPPKAHPPLARDRSLESTEKQRQEARKRLMAAKRAASVRQNSATESADSIEIYIPEAQTRL.

Disordered regions lie at residues 155 to 213, 395 to 418, and 918 to 989; these read HSLE…GYWS, MAED…ARRA, and NWRP…DSIE. Residues 194–204 show a composition bias toward basic and acidic residues; sequence RERCKSAEPKN. Composition is skewed to basic and acidic residues over residues 923–932 and 947–965; these read DPPERKERRL and LARD…EARK. The segment covering 976-985 has biased composition (polar residues); the sequence is VRQNSATESA. Residues 997 to 999 carry the PDZ-binding motif; the sequence is TRL.

This sequence belongs to the SAPAP family.

It is found in the cell membrane. Its subcellular location is the postsynaptic density. The protein localises to the synapse. Part of the postsynaptic scaffold in neuronal cells. This is Disks large-associated protein 1 from Danio rerio (Zebrafish).